Reading from the N-terminus, the 457-residue chain is Proton-translocating ferredoxin:NAD(+) oxidoreductase complex subunit C (457 aa).

4Fe-4S ferredoxin-type domains are found at residues 353–386 (TKNDVNDGKESSCIRCGRCLKACPMHLNPSMLSI) and 396–427 (AKEEYNLLDCVECGSCVYTCPAKRKIVQYIRY). Residues C365, C368, C371, C375, C405, C408, C411, and C415 each contribute to the [4Fe-4S] cluster site. The disordered stretch occupies residues 433 to 457 (RAAGEREKAKAAKAKEKKEKEEVLK).

This sequence belongs to the 4Fe4S bacterial-type ferredoxin family. RnfC subfamily. In terms of assembly, the complex is composed of six subunits: RnfA, RnfB, RnfC, RnfD, RnfE and RnfG. It depends on [4Fe-4S] cluster as a cofactor.

Its subcellular location is the cell membrane. Part of a membrane-bound complex that couples electron transfer with translocation of ions across the membrane. Couples electron transfer from reduced ferredoxin to NAD(+) with translocation of H(+) out of the cell. Essential for energy conservation during autotrophic growth. Contributes to ATP synthesis during heterotrophic growth. This chain is Proton-translocating ferredoxin:NAD(+) oxidoreductase complex subunit C, found in Clostridium ljungdahlii (strain ATCC 55383 / DSM 13528 / PETC).